An 80-amino-acid polypeptide reads, in one-letter code: Large ribosomal subunit protein eL14 (80 aa).

It belongs to the eukaryotic ribosomal protein eL14 family.

This chain is Large ribosomal subunit protein eL14, found in Methanocaldococcus jannaschii (strain ATCC 43067 / DSM 2661 / JAL-1 / JCM 10045 / NBRC 100440) (Methanococcus jannaschii).